A 354-amino-acid polypeptide reads, in one-letter code: Methylthioribose-1-phosphate isomerase (354 aa).

Substrate is bound by residues Arg-58–Ala-60, Arg-101, and Gln-204. Asp-245 serves as the catalytic Proton donor. Asn-255 to Lys-256 contacts substrate.

The protein belongs to the eIF-2B alpha/beta/delta subunits family. MtnA subfamily.

It carries out the reaction 5-(methylsulfanyl)-alpha-D-ribose 1-phosphate = 5-(methylsulfanyl)-D-ribulose 1-phosphate. Its pathway is amino-acid biosynthesis; L-methionine biosynthesis via salvage pathway; L-methionine from S-methyl-5-thio-alpha-D-ribose 1-phosphate: step 1/6. Catalyzes the interconversion of methylthioribose-1-phosphate (MTR-1-P) into methylthioribulose-1-phosphate (MTRu-1-P). The sequence is that of Methylthioribose-1-phosphate isomerase from Xanthomonas euvesicatoria pv. vesicatoria (strain 85-10) (Xanthomonas campestris pv. vesicatoria).